A 337-amino-acid chain; its full sequence is Tetraacyldisaccharide 4'-kinase (337 aa).

52-59 contacts ATP; the sequence is TLGGAGKT.

Belongs to the LpxK family.

It carries out the reaction a lipid A disaccharide + ATP = a lipid IVA + ADP + H(+). The protein operates within glycolipid biosynthesis; lipid IV(A) biosynthesis; lipid IV(A) from (3R)-3-hydroxytetradecanoyl-[acyl-carrier-protein] and UDP-N-acetyl-alpha-D-glucosamine: step 6/6. In terms of biological role, transfers the gamma-phosphate of ATP to the 4'-position of a tetraacyldisaccharide 1-phosphate intermediate (termed DS-1-P) to form tetraacyldisaccharide 1,4'-bis-phosphate (lipid IVA). The protein is Tetraacyldisaccharide 4'-kinase of Methylobacterium nodulans (strain LMG 21967 / CNCM I-2342 / ORS 2060).